Here is a 281-residue protein sequence, read N- to C-terminus: Bifunctional protein FolD (281 aa).

Residues 165–167 (GRS) and Ser190 contribute to the NADP(+) site.

The protein belongs to the tetrahydrofolate dehydrogenase/cyclohydrolase family. In terms of assembly, homodimer.

The enzyme catalyses (6R)-5,10-methylene-5,6,7,8-tetrahydrofolate + NADP(+) = (6R)-5,10-methenyltetrahydrofolate + NADPH. It carries out the reaction (6R)-5,10-methenyltetrahydrofolate + H2O = (6R)-10-formyltetrahydrofolate + H(+). Its pathway is one-carbon metabolism; tetrahydrofolate interconversion. In terms of biological role, catalyzes the oxidation of 5,10-methylenetetrahydrofolate to 5,10-methenyltetrahydrofolate and then the hydrolysis of 5,10-methenyltetrahydrofolate to 10-formyltetrahydrofolate. The sequence is that of Bifunctional protein FolD from Polaromonas naphthalenivorans (strain CJ2).